Reading from the N-terminus, the 149-residue chain is FAD synthase (149 aa).

Residues 10 to 11 (TF), 15 to 18 (HPGH), Asp-95, and Tyr-123 each bind ATP.

Belongs to the archaeal FAD synthase family. As to quaternary structure, homodimer. Co(2+) is required as a cofactor.

It carries out the reaction FMN + ATP + H(+) = FAD + diphosphate. The protein operates within cofactor biosynthesis; FAD biosynthesis; FAD from FMN: step 1/1. Is inhibited by the product PPi. In terms of biological role, catalyzes the transfer of the AMP portion of ATP to flavin mononucleotide (FMN) to produce flavin adenine dinucleotide (FAD) coenzyme. To a lesser extent, is also able to utilize other nucleotides such as CTP and GTP as substrates, producing the modified coenzymes, flavin cytosine dinucleotide (FCD) and flavin guanine dinucleotide (FGD), respectively. Does not catalyze the reverse reaction to produce FMN and ATP from FAD and PPi. Does not function as a glycerol-3-phosphate cytidylyltransferase, as previously annotated in the complete genome. This Methanocaldococcus jannaschii (strain ATCC 43067 / DSM 2661 / JAL-1 / JCM 10045 / NBRC 100440) (Methanococcus jannaschii) protein is FAD synthase (ribL).